The primary structure comprises 257 residues: AN1-type zinc finger protein 2B (257 aa).

2 AN1-type zinc fingers span residues 4–52 and 94–142; these read PDLG…QKDI and KIFT…HQTS. Residues Cys-10, Cys-15, Cys-25, Cys-28, Cys-33, His-36, His-42, Cys-44, Cys-100, Cys-105, Cys-115, Cys-118, Cys-123, His-126, His-132, and Cys-134 each coordinate Zn(2+). Residues 141–151 form a VCP/p97-interacting motif (VIM) region; sequence TSRAGLAAISR. The disordered stretch occupies residues 152 to 184; the sequence is AQGLASTSTAPSPSRTLPSSSSPSRATPQLPTR. Low complexity predominate over residues 155 to 179; sequence LASTSTAPSPSRTLPSSSSPSRATP. Residues Ser-163, Ser-173, and Ser-187 each carry the phosphoserine; by MAPK14 modification. UIM domains follow at residues 197-216 and 221-240; these read SEDE…AKPQ and QEED…AEYQ. Cysteine methyl ester is present on Cys-254. Cys-254 carries S-geranylgeranyl cysteine lipidation. The CAAX motif motif lies at 254-257; sequence CSLC. Residues 255 to 257 constitute a propeptide, removed in mature form; it reads SLC.

As to quaternary structure, binds 'Lys-48'-linked polyubiquitin chains of ubiquitinated proteins. Associates with the proteasome complex; upon exposure to arsenite. Interacts (via VIM motif) with VCP; the interaction is direct. Interacts with BAG6. Interacts with IGF1R (nascent precursor form). Interacts with DERL1, FAF2, NPLOC4 and UFD1; probably through VCP. Phosphorylated by MAPK14. Phosphorylation has no effect on association with the proteasome complex.

It localises to the endoplasmic reticulum membrane. Functionally, plays a role in protein homeostasis by regulating both the translocation and the ubiquitin-mediated proteasomal degradation of nascent proteins at the endoplasmic reticulum. It is involved in the regulation of signal-mediated translocation of proteins into the endoplasmic reticulum. It also plays a role in the ubiquitin-mediated proteasomal degradation of proteins for which signal-mediated translocation to the endoplasmic reticulum has failed. May therefore function in the endoplasmic reticulum stress-induced pre-emptive quality control, a mechanism that selectively attenuates the translocation of newly synthesized proteins into the endoplasmic reticulum and reroutes them to the cytosol for proteasomal degradation. By controlling the steady-state expression of the IGF1R receptor, indirectly regulates the insulin-like growth factor receptor signaling pathway. This Mus musculus (Mouse) protein is AN1-type zinc finger protein 2B.